The chain runs to 45 residues: uncharacterized protein (45 aa).

Residues 18–45 are disordered; the sequence is RRGRIGVQPSPERRSEVVGPFPLARSLS.

This is an uncharacterized protein from Homo sapiens (Human).